The following is an 86-amino-acid chain: Small ribosomal subunit protein bS20 (86 aa).

This sequence belongs to the bacterial ribosomal protein bS20 family.

Functionally, binds directly to 16S ribosomal RNA. In Novosphingobium aromaticivorans (strain ATCC 700278 / DSM 12444 / CCUG 56034 / CIP 105152 / NBRC 16084 / F199), this protein is Small ribosomal subunit protein bS20.